The chain runs to 375 residues: Queuine tRNA-ribosyltransferase (375 aa).

Asp-89 serves as the catalytic Proton acceptor. Residues 89–93 (DSGGF), Asp-143, Gln-187, and Gly-214 contribute to the substrate site. Residues 245–251 (GVGKPED) are RNA binding. Asp-264 serves as the catalytic Nucleophile. The interval 269–273 (TRNAR) is RNA binding; important for wobble base 34 recognition. Zn(2+) is bound by residues Cys-302, Cys-304, Cys-307, and His-333.

It belongs to the queuine tRNA-ribosyltransferase family. In terms of assembly, homodimer. Within each dimer, one monomer is responsible for RNA recognition and catalysis, while the other monomer binds to the replacement base PreQ1. The cofactor is Zn(2+).

The enzyme catalyses 7-aminomethyl-7-carbaguanine + guanosine(34) in tRNA = 7-aminomethyl-7-carbaguanosine(34) in tRNA + guanine. It participates in tRNA modification; tRNA-queuosine biosynthesis. Functionally, catalyzes the base-exchange of a guanine (G) residue with the queuine precursor 7-aminomethyl-7-deazaguanine (PreQ1) at position 34 (anticodon wobble position) in tRNAs with GU(N) anticodons (tRNA-Asp, -Asn, -His and -Tyr). Catalysis occurs through a double-displacement mechanism. The nucleophile active site attacks the C1' of nucleotide 34 to detach the guanine base from the RNA, forming a covalent enzyme-RNA intermediate. The proton acceptor active site deprotonates the incoming PreQ1, allowing a nucleophilic attack on the C1' of the ribose to form the product. After dissociation, two additional enzymatic reactions on the tRNA convert PreQ1 to queuine (Q), resulting in the hypermodified nucleoside queuosine (7-(((4,5-cis-dihydroxy-2-cyclopenten-1-yl)amino)methyl)-7-deazaguanosine). This chain is Queuine tRNA-ribosyltransferase, found in Escherichia coli O81 (strain ED1a).